The primary structure comprises 103 residues: NADH dehydrogenase [ubiquinone] 1 beta subcomplex subunit 7 (103 aa).

In terms of domain architecture, CHCH spans 27–69 (RDMCAHLLIPLNKCRQAEFYLPWKCEDERHVYEKCEYELVMER). 2 consecutive short sequence motifs (cx9C motif) follow at residues 30–40 (CAHLLIPLNKC) and 51–61 (CEDERHVYEKC). 2 disulfide bridges follow: C30/C61 and C40/C51.

This sequence belongs to the complex I NDUFB7 subunit family. Complex I is composed of at least 49 different subunits.

The protein localises to the mitochondrion. Its subcellular location is the mitochondrion inner membrane. It is found in the mitochondrion intermembrane space. Functionally, accessory subunit of the mitochondrial membrane respiratory chain NADH dehydrogenase (Complex I), that is believed not to be involved in catalysis. Complex I functions in the transfer of electrons from NADH to the respiratory chain. The immediate electron acceptor for the enzyme is believed to be ubiquinone. In Arabidopsis thaliana (Mouse-ear cress), this protein is NADH dehydrogenase [ubiquinone] 1 beta subcomplex subunit 7.